Here is a 237-residue protein sequence, read N- to C-terminus: Pyridoxine 5'-phosphate synthase (237 aa).

Asn-7 and Arg-18 together coordinate 3-amino-2-oxopropyl phosphate. His-43 functions as the Proton acceptor in the catalytic mechanism. The 1-deoxy-D-xylulose 5-phosphate site is built by Arg-45 and His-50. The Proton acceptor role is filled by Glu-70. A 1-deoxy-D-xylulose 5-phosphate-binding site is contributed by Thr-100. His-190 serves as the catalytic Proton donor. 3-amino-2-oxopropyl phosphate is bound by residues Asp-191 and 213–214; that span reads GH.

This sequence belongs to the PNP synthase family. In terms of assembly, homooctamer; tetramer of dimers.

The protein localises to the cytoplasm. The catalysed reaction is 3-amino-2-oxopropyl phosphate + 1-deoxy-D-xylulose 5-phosphate = pyridoxine 5'-phosphate + phosphate + 2 H2O + H(+). It functions in the pathway cofactor biosynthesis; pyridoxine 5'-phosphate biosynthesis; pyridoxine 5'-phosphate from D-erythrose 4-phosphate: step 5/5. In terms of biological role, catalyzes the complicated ring closure reaction between the two acyclic compounds 1-deoxy-D-xylulose-5-phosphate (DXP) and 3-amino-2-oxopropyl phosphate (1-amino-acetone-3-phosphate or AAP) to form pyridoxine 5'-phosphate (PNP) and inorganic phosphate. The sequence is that of Pyridoxine 5'-phosphate synthase from Bacteroides thetaiotaomicron (strain ATCC 29148 / DSM 2079 / JCM 5827 / CCUG 10774 / NCTC 10582 / VPI-5482 / E50).